We begin with the raw amino-acid sequence, 410 residues long: DNA replication and repair protein RecF (410 aa).

30–37 provides a ligand contact to ATP; it reads GPNGHGKT.

The protein belongs to the RecF family.

It is found in the cytoplasm. The RecF protein is involved in DNA metabolism; it is required for DNA replication and normal SOS inducibility. RecF binds preferentially to single-stranded, linear DNA. It also seems to bind ATP. The polypeptide is DNA replication and repair protein RecF (Rhodococcus opacus (strain B4)).